The primary structure comprises 445 residues: MNEEYDVIVLGTGLTECILSGIMSVNGKKVLHMDQNPYYGGESASITPLEDLYKRFKLPGQPPASMGRGRDWNVDLIPKFLMANGQLVKMLLFTEVTRYMDFKVIEGSFVYKGGKIYKVPSTEAEALASSLMGLFEKRRFRKFLVYVANFDEKDPRTFEGVDPKKTSMRDVYKKFDLGQDVIDFTGHSLALYRTDDYLDQPCCETINRIKLYSESLARYGKSPYLYPLYGLGELPQGFARLSAIYGGTYMLNKPIEEIIVQNGKVVGVKSEGEIARCKQLICDPSYVKDRVEKVGQVIRVICILSHPIKNTNDANSCQIIIPQNQVNRKSDIYVCMISFAHNVAAQGKYIAIVSTTVETKEPEKEIRPALELLEPIEQKFVSISDLFVPKDLGTDSQIFISRAYDATTHFETTCDDIKDIYKRMTGSEFDFEEMKRKKNDIYGED.

At Met1 the chain carries N-acetylmethionine. The residue at position 57 (Lys57) is an N6-succinyllysine. Lys112 carries the N6-acetyllysine modification. At Ser130 the chain carries Phosphoserine. Lys269 is modified (N6-acetyllysine). Ser382 is subject to Phosphoserine.

The protein belongs to the Rab GDI family. As to quaternary structure, interacts with RHOH. Interacts with the GDP-bound inactive forms of RAB3A, RAB3B, RAB3C, RAB5A, RAB5B, RAB5C, RAB8A, RAB8B, RAB10, RAB12, RAB35, and RAB43; binds RAB3D to a lesser extent. Interacts with DZIP1; this interaction negatively regulates the interaction of GDI2 with GDP-bound RAB8A. Ubiquitously expressed.

It localises to the cytoplasm. Its subcellular location is the membrane. The protein resides in the golgi apparatus. The protein localises to the trans-Golgi network. GDP-dissociation inhibitor preventing the GDP to GTP exchange of most Rab proteins. By keeping these small GTPases in their inactive GDP-bound form regulates intracellular membrane trafficking. Negatively regulates protein transport to the cilium and ciliogenesis through the inhibition of RAB8A. The sequence is that of Rab GDP dissociation inhibitor beta (Gdi2) from Rattus norvegicus (Rat).